The following is a 270-amino-acid chain: Molybdenum-pterin-binding protein MopB (270 aa).

Mop domains follow at residues 131–197 and 203–269; these read RTSA…LLAG and RLSV…ILAL.

Belongs to the ModE family.

This Rhodobacter capsulatus (Rhodopseudomonas capsulata) protein is Molybdenum-pterin-binding protein MopB (mopB).